The chain runs to 341 residues: MKPYPIHCVSIVIPVYNEQESLPELLRRTTAACKQLAYEYEIILVDDGSRDNSAQLLEDAAAEDGSNVVAVILNRNYGQHAAIMAGFEQCRGDVVITLDADLQNPPEEIPRLVEQAALGYDVVATVRNNRQDSAFRRWPSRLINLAVQRSTGVAMTDYGCMLRAYRRTIVDAMLACRERSTFIPILANGFARHTTEILVHHAEREHGESKYSAMRLISLMFDLLTCMTTTPLRLLSIVGFSLAALGMLFAFALIVMRLAFGADWAGDGLFVLFAVLFVFTGGQFIGMGLLGEYLGRMYSDVRARPRFFIEKVLRNQPAAPAPVVVVDGLVSSHTSTSADQV.

2 helical membrane passes run L235–V255 and L269–L289.

It belongs to the glycosyltransferase 2 family.

The protein localises to the cell inner membrane. The catalysed reaction is UDP-4-deoxy-4-formamido-beta-L-arabinose + di-trans,octa-cis-undecaprenyl phosphate = 4-deoxy-4-formamido-alpha-L-arabinopyranosyl di-trans,octa-cis-undecaprenyl phosphate + UDP. The protein operates within glycolipid biosynthesis; 4-amino-4-deoxy-alpha-L-arabinose undecaprenyl phosphate biosynthesis; 4-amino-4-deoxy-alpha-L-arabinose undecaprenyl phosphate from UDP-4-deoxy-4-formamido-beta-L-arabinose and undecaprenyl phosphate: step 1/2. It participates in bacterial outer membrane biogenesis; lipopolysaccharide biosynthesis. Functionally, catalyzes the transfer of 4-deoxy-4-formamido-L-arabinose from UDP to undecaprenyl phosphate. The modified arabinose is attached to lipid A and is required for resistance to polymyxin and cationic antimicrobial peptides. This is Undecaprenyl-phosphate 4-deoxy-4-formamido-L-arabinose transferase from Pseudomonas fluorescens (strain SBW25).